A 152-amino-acid chain; its full sequence is Lipoprotein signal peptidase (152 aa).

A run of 3 helical transmembrane segments spans residues 33–53 (VVPP…FGLL), 58–78 (MLFV…YFKI), and 83–102 (PVLD…NLAD). Active-site residues include aspartate 111 and aspartate 125. Residues 120 to 140 (VFNLADTAIVTGAFLLAWALL) traverse the membrane as a helical segment.

This sequence belongs to the peptidase A8 family.

It is found in the cell membrane. It carries out the reaction Release of signal peptides from bacterial membrane prolipoproteins. Hydrolyzes -Xaa-Yaa-Zaa-|-(S,diacylglyceryl)Cys-, in which Xaa is hydrophobic (preferably Leu), and Yaa (Ala or Ser) and Zaa (Gly or Ala) have small, neutral side chains.. It participates in protein modification; lipoprotein biosynthesis (signal peptide cleavage). Its function is as follows. This protein specifically catalyzes the removal of signal peptides from prolipoproteins. The polypeptide is Lipoprotein signal peptidase (Pelotomaculum thermopropionicum (strain DSM 13744 / JCM 10971 / SI)).